A 187-amino-acid polypeptide reads, in one-letter code: UPF0340 protein SPT_0687 (187 aa).

The protein belongs to the UPF0340 family.

This is UPF0340 protein SPT_0687 from Streptococcus pneumoniae (strain Taiwan19F-14).